A 321-amino-acid polypeptide reads, in one-letter code: NADPH-dependent codeinone reductase 1-1 (321 aa).

NADPH-binding residues include T27 and D51. Catalysis depends on proton donor residues Y56 and H119. Residue H119 coordinates substrate. Q187, S214, L216, S264, and R269 together coordinate NADPH.

It belongs to the aldo/keto reductase family. As to expression, latex secreting cells (laticifer cells). Expressed constitutively and ubiquitously with highest levels in capsules. Restricted to the parietal region of sieve elements adjacent or proximal to laticifers in roots, stems, leaves and carpels.

The protein localises to the cytoplasm. It localises to the cytosol. It carries out the reaction codeine + NADP(+) = codeinone + NADPH + H(+). The enzyme catalyses neopine + NADP(+) = neopinone + NADPH + H(+). It catalyses the reaction morphine + NADP(+) = morphinone + NADPH + H(+). The catalysed reaction is neomorphine + NADP(+) = neomorphinone + NADPH + H(+). Its pathway is alkaloid biosynthesis; morphine biosynthesis. In terms of biological role, NADPH-dependent reductase involved in biosynthesis of morphinan-type benzylisoquinoline and opiate alkaloids natural products. Reduces codeinone to codeine in the penultimate step in morphine biosynthesis. Can use morphinone, hydrocodone and hydromorphone as substrate during reductive reaction with NADPH as cofactor, and morphine and dihydrocodeine as substrate during oxidative reaction with NADP as cofactor. Converts morphinone to morphine, and neomorphinone to neomorphine. Reduces irreversibly neopinone, a spontaneous isomer of codeinone, to neopine; in planta, neopine levels are limited to low levels. The polypeptide is NADPH-dependent codeinone reductase 1-1 (Papaver somniferum (Opium poppy)).